A 220-amino-acid polypeptide reads, in one-letter code: Pyridoxine/pyridoxamine 5'-phosphate oxidase (220 aa).

Substrate contacts are provided by residues Arg13–Tyr16 and Lys77. Residues Arg72–Lys77, Phe87–Thr88, Lys94, and Gln116 each bind FMN. Positions 134, 138, and 142 each coordinate substrate. FMN contacts are provided by residues Gln151–Ser152 and Trp197. Arg203–His205 contributes to the substrate binding site. Arg207 is a binding site for FMN.

The protein belongs to the pyridoxamine 5'-phosphate oxidase family. In terms of assembly, homodimer. Requires FMN as cofactor.

The catalysed reaction is pyridoxamine 5'-phosphate + O2 + H2O = pyridoxal 5'-phosphate + H2O2 + NH4(+). It carries out the reaction pyridoxine 5'-phosphate + O2 = pyridoxal 5'-phosphate + H2O2. The protein operates within cofactor metabolism; pyridoxal 5'-phosphate salvage; pyridoxal 5'-phosphate from pyridoxamine 5'-phosphate: step 1/1. Its pathway is cofactor metabolism; pyridoxal 5'-phosphate salvage; pyridoxal 5'-phosphate from pyridoxine 5'-phosphate: step 1/1. Functionally, catalyzes the oxidation of either pyridoxine 5'-phosphate (PNP) or pyridoxamine 5'-phosphate (PMP) into pyridoxal 5'-phosphate (PLP). The polypeptide is Pyridoxine/pyridoxamine 5'-phosphate oxidase (Mycobacterium sp. (strain KMS)).